Reading from the N-terminus, the 366-residue chain is Chorismate synthase (366 aa).

2 residues coordinate NADP(+): Arg-48 and Arg-54. FMN contacts are provided by residues 125–127 (RSS), 238–239 (NA), Gly-278, 293–297 (KPTSS), and Arg-319.

Belongs to the chorismate synthase family. As to quaternary structure, homotetramer. It depends on FMNH2 as a cofactor.

It catalyses the reaction 5-O-(1-carboxyvinyl)-3-phosphoshikimate = chorismate + phosphate. It participates in metabolic intermediate biosynthesis; chorismate biosynthesis; chorismate from D-erythrose 4-phosphate and phosphoenolpyruvate: step 7/7. Its function is as follows. Catalyzes the anti-1,4-elimination of the C-3 phosphate and the C-6 proR hydrogen from 5-enolpyruvylshikimate-3-phosphate (EPSP) to yield chorismate, which is the branch point compound that serves as the starting substrate for the three terminal pathways of aromatic amino acid biosynthesis. This reaction introduces a second double bond into the aromatic ring system. The chain is Chorismate synthase from Burkholderia ambifaria (strain ATCC BAA-244 / DSM 16087 / CCUG 44356 / LMG 19182 / AMMD) (Burkholderia cepacia (strain AMMD)).